The following is a 259-amino-acid chain: Transmembrane protein 81 (259 aa).

A signal peptide spans 1 to 18 (MALSTLWLVLMLWTSLFS). The Extracellular portion of the chain corresponds to 19 to 221 (DSQCSTLSQA…KVYSSSTIRN (203 aa)). The Ig-like domain maps to 97–172 (GRRLVLDCLE…VLDTGKRRVK (76 aa)). A disulfide bridge links Cys104 with Cys161. A helical transmembrane segment spans residues 222-242 (IVIISVPLSFAIAVVIFIFLF). Residues 243–259 (CYSRRARRAAHLCQDNI) lie on the Cytoplasmic side of the membrane.

As to quaternary structure, forms a complex with izumo1 and spaca6 on spermatocyte cell membrane. The complex binds to oocyte protein bncr. Expressed in sperm.

It localises to the cell membrane. In terms of biological role, essential fertilization factor required for male fertility. Part of a conserved trimeric sperm complex with the essential fertilization factors IZUMO1 and SPACA6 which bridges sperm and oocyte membranes during fertilization by binding to IZUMO1R/JUNO on the oocyte. This Danio rerio (Zebrafish) protein is Transmembrane protein 81.